The chain runs to 574 residues: M-phase inducer phosphatase 2 (574 aa).

2 disordered regions span residues 31–51 (GFGF…SSSP) and 90–110 (RRTS…AGLC). Ser42 bears the Phosphoserine mark. Residues 90–105 (RRTSECSLSSESSESS) are compositionally biased toward low complexity. Ser166 carries the phosphoserine; by MELK modification. A Phosphoserine modification is found at Ser246. Phosphoserine; by MAPKAPK2 and MELK is present on Ser319. Phosphoserine; by MELK and MAPK14 is present on Ser319. Positions 339-359 (DVPVLSKRRKSGTPLEEQQLE) are disordered. Ser349 is subject to Phosphoserine; by AURKA. Ser370 carries the post-translational modification Phosphoserine; by BRSK1 and MAPK14. The region spanning 425–532 (IVEKFVIVDC…FFPQHPNFCE (108 aa)) is the Rhodanese domain. Cys481 is a catalytic residue. Ser557 carries the post-translational modification Phosphoserine.

It belongs to the MPI phosphatase family. In terms of assembly, interacts with MAPK14 and 14-3-3 proteins. Post-translationally, phosphorylated by BRSK1 in vitro. Phosphorylated by CHEK1, which inhibits the activity of this protein. Phosphorylation at Ser-349 by AURKA might locally participate in the control of the onset of mitosis. Phosphorylation by MELK at Ser-166 promotes localization to the centrosome and the spindle poles during mitosis. Phosphorylation at Ser-319 and Ser-370 by MAPK14 is required for binding to 14-3-3 proteins.

The protein resides in the cytoplasm. It localises to the cytoskeleton. The protein localises to the microtubule organizing center. Its subcellular location is the centrosome. It is found in the spindle pole. It catalyses the reaction O-phospho-L-tyrosyl-[protein] + H2O = L-tyrosyl-[protein] + phosphate. Its activity is regulated as follows. Stimulated by B-type cyclins. Tyrosine protein phosphatase which functions as a dosage-dependent inducer of mitotic progression. Directly dephosphorylates CDK1 and stimulates its kinase activity. Required for G2/M phases of the cell cycle progression and abscission during cytokinesis in a ECT2-dependent manner. The three isoforms seem to have a different level of activity. The polypeptide is M-phase inducer phosphatase 2 (Cdc25b) (Rattus norvegicus (Rat)).